We begin with the raw amino-acid sequence, 39 residues long: Histone H2A (39 aa).

Residues 1–18 show a composition bias toward basic residues; sequence AGRGKQGGKVRAKAKTRS. Residues 1–24 are disordered; sequence AGRGKQGGKVRAKAKTRSSRAGLQ. An N6-(2-hydroxyisobutyryl)lysine modification is found at K5. K5 carries the N6-acetyllysine modification. Position 9 is an N6-(2-hydroxyisobutyryl)lysine; alternate (K9). N6-lactoyllysine; alternate is present on K9. Position 9 is an N6-succinyllysine (K9). Glycyl lysine isopeptide (Lys-Gly) (interchain with G-Cter in ubiquitin) cross-links involve residues K13 and K15. K36 carries the N6-(2-hydroxyisobutyryl)lysine; alternate modification.

This sequence belongs to the histone H2A family. As to quaternary structure, the nucleosome is a histone octamer containing two molecules each of H2A, H2B, H3 and H4 assembled in one H3-H4 heterotetramer and two H2A-H2B heterodimers. The octamer wraps approximately 147 bp of DNA. Monoubiquitination of C-terminus gives a specific tag for epigenetic transcriptional repression. Following DNA double-strand breaks (DSBs), it is ubiquitinated through 'Lys-63' linkage of ubiquitin moieties.

The protein resides in the nucleus. It is found in the chromosome. Core component of nucleosome. Nucleosomes wrap and compact DNA into chromatin, limiting DNA accessibility to the cellular machineries which require DNA as a template. Histones thereby play a central role in transcription regulation, DNA repair, DNA replication and chromosomal stability. DNA accessibility is regulated via a complex set of post-translational modifications of histones, also called histone code, and nucleosome remodeling. Its function is as follows. Buforins are strong antimicrobial activities in vitro against a broad-spectrum of microorganisms including fungi. Buforin II is more potent than buforin I. This Bufo gargarizans (Asian toad) protein is Histone H2A.